A 318-amino-acid chain; its full sequence is NADH-ubiquinone oxidoreductase chain 1 (318 aa).

8 consecutive transmembrane segments (helical) span residues 2–22 (FTIN…FLTL), 70–90 (MFII…IPLP), 100–120 (LGVL…LWSG), 146–166 (LAII…STLI), 171–191 (HLWL…STLA), 222–242 (LFFM…TILF), 254–276 (LYTI…IRAS), and 294–314 (LPLT…TSSI).

The protein belongs to the complex I subunit 1 family. In terms of assembly, core subunit of respiratory chain NADH dehydrogenase (Complex I) which is composed of 45 different subunits.

The protein localises to the mitochondrion inner membrane. It carries out the reaction a ubiquinone + NADH + 5 H(+)(in) = a ubiquinol + NAD(+) + 4 H(+)(out). Functionally, core subunit of the mitochondrial membrane respiratory chain NADH dehydrogenase (Complex I) which catalyzes electron transfer from NADH through the respiratory chain, using ubiquinone as an electron acceptor. Essential for the catalytic activity and assembly of complex I. This Ceratotherium simum (White rhinoceros) protein is NADH-ubiquinone oxidoreductase chain 1 (MT-ND1).